The sequence spans 339 residues: 4-hydroxy-2-oxovalerate aldolase 3 (339 aa).

The Pyruvate carboxyltransferase domain maps to 7–259; it reads IRVTDTSLRD…KTGIDFFAIA (253 aa). 15 to 16 is a substrate binding site; the sequence is RD. Asp-16 lines the Mn(2+) pocket. The Proton acceptor role is filled by His-19. Positions 169 and 198 each coordinate substrate. His-198 and His-200 together coordinate Mn(2+). Residue Tyr-289 participates in substrate binding.

The protein belongs to the 4-hydroxy-2-oxovalerate aldolase family.

The enzyme catalyses (S)-4-hydroxy-2-oxopentanoate = acetaldehyde + pyruvate. The polypeptide is 4-hydroxy-2-oxovalerate aldolase 3 (Rhodococcus opacus (strain B4)).